A 330-amino-acid polypeptide reads, in one-letter code: Phenylalanine--tRNA ligase alpha subunit (330 aa).

Glu246 contributes to the Mg(2+) binding site.

The protein belongs to the class-II aminoacyl-tRNA synthetase family. Phe-tRNA synthetase alpha subunit type 1 subfamily. As to quaternary structure, tetramer of two alpha and two beta subunits. Requires Mg(2+) as cofactor.

The protein localises to the cytoplasm. The catalysed reaction is tRNA(Phe) + L-phenylalanine + ATP = L-phenylalanyl-tRNA(Phe) + AMP + diphosphate + H(+). The protein is Phenylalanine--tRNA ligase alpha subunit of Campylobacter jejuni subsp. doylei (strain ATCC BAA-1458 / RM4099 / 269.97).